Reading from the N-terminus, the 226-residue chain is ATP synthase F(0) complex subunit a (226 aa).

Helical transmembrane passes span 6–26, 68–88, 97–117, 138–158, 164–184, and 189–209; these read FASFITPMMFGLPLVTLIVLF, WALMLMSLILFIGSTNLLGLL, QLSMNLGMAIPLWGGAVITGF, IPMLVIIETISLFIQPVALAV, ITAGHLLIHLIGGATLALMSI, and ALITFIILILLTVLEFAVAMI.

Belongs to the ATPase A chain family. As to quaternary structure, component of the ATP synthase complex composed at least of ATP5F1A/subunit alpha, ATP5F1B/subunit beta, ATP5MC1/subunit c (homooctomer), MT-ATP6/subunit a, MT-ATP8/subunit 8, ATP5ME/subunit e, ATP5MF/subunit f, ATP5MG/subunit g, ATP5MK/subunit k, ATP5MJ/subunit j, ATP5F1C/subunit gamma, ATP5F1D/subunit delta, ATP5F1E/subunit epsilon, ATP5PF/subunit F6, ATP5PB/subunit b, ATP5PD/subunit d, ATP5PO/subunit OSCP. ATP synthase complex consists of a soluble F(1) head domain (subunits alpha(3) and beta(3)) - the catalytic core - and a membrane F(0) domain - the membrane proton channel (subunits c, a, 8, e, f, g, k and j). These two domains are linked by a central stalk (subunits gamma, delta, and epsilon) rotating inside the F1 region and a stationary peripheral stalk (subunits F6, b, d, and OSCP). Interacts with DNAJC30; interaction is direct.

The protein localises to the mitochondrion inner membrane. It carries out the reaction H(+)(in) = H(+)(out). In terms of biological role, subunit a, of the mitochondrial membrane ATP synthase complex (F(1)F(0) ATP synthase or Complex V) that produces ATP from ADP in the presence of a proton gradient across the membrane which is generated by electron transport complexes of the respiratory chain. ATP synthase complex consist of a soluble F(1) head domain - the catalytic core - and a membrane F(1) domain - the membrane proton channel. These two domains are linked by a central stalk rotating inside the F(1) region and a stationary peripheral stalk. During catalysis, ATP synthesis in the catalytic domain of F(1) is coupled via a rotary mechanism of the central stalk subunits to proton translocation. With the subunit c (ATP5MC1), forms the proton-conducting channel in the F(0) domain, that contains two crucial half-channels (inlet and outlet) that facilitate proton movement from the mitochondrial intermembrane space (IMS) into the matrix. Protons are taken up via the inlet half-channel and released through the outlet half-channel, following a Grotthuss mechanism. The polypeptide is ATP synthase F(0) complex subunit a (Ovis aries (Sheep)).